A 170-amino-acid polypeptide reads, in one-letter code: Crossover junction endodeoxyribonuclease RuvC (170 aa).

Catalysis depends on residues aspartate 11, glutamate 71, and aspartate 143. Residues aspartate 11, glutamate 71, and aspartate 143 each coordinate Mg(2+).

It belongs to the RuvC family. In terms of assembly, homodimer which binds Holliday junction (HJ) DNA. The HJ becomes 2-fold symmetrical on binding to RuvC with unstacked arms; it has a different conformation from HJ DNA in complex with RuvA. In the full resolvosome a probable DNA-RuvA(4)-RuvB(12)-RuvC(2) complex forms which resolves the HJ. The cofactor is Mg(2+).

Its subcellular location is the cytoplasm. The enzyme catalyses Endonucleolytic cleavage at a junction such as a reciprocal single-stranded crossover between two homologous DNA duplexes (Holliday junction).. Functionally, the RuvA-RuvB-RuvC complex processes Holliday junction (HJ) DNA during genetic recombination and DNA repair. Endonuclease that resolves HJ intermediates. Cleaves cruciform DNA by making single-stranded nicks across the HJ at symmetrical positions within the homologous arms, yielding a 5'-phosphate and a 3'-hydroxyl group; requires a central core of homology in the junction. The consensus cleavage sequence is 5'-(A/T)TT(C/G)-3'. Cleavage occurs on the 3'-side of the TT dinucleotide at the point of strand exchange. HJ branch migration catalyzed by RuvA-RuvB allows RuvC to scan DNA until it finds its consensus sequence, where it cleaves and resolves the cruciform DNA. The sequence is that of Crossover junction endodeoxyribonuclease RuvC from Rhizobium rhizogenes (strain K84 / ATCC BAA-868) (Agrobacterium radiobacter).